A 245-amino-acid chain; its full sequence is MSAHRVLLEVCVDTPAGLAAAIAGGADRVELCSALALQGLTPAPGLMAQAASAPIPVYPMIRPRHGDFCYDARDLDAMRRDIDAVRGYGLPGVTIGASQANGALDLKVLRKLVEQAEGLGTTLHRAFDVVPDMSEALEIAVELGFERVLTSGGALSALDATDRLAALVEQAGERISIMAGAGVRPGNIAELVRRTGVREAHGSFGGPVPGADPRSQLGAMGFVPPELRDTSQAAVAEAVKALRAL.

The protein belongs to the CutC family.

It is found in the cytoplasm. The chain is PF03932 family protein CutC from Caulobacter vibrioides (strain ATCC 19089 / CIP 103742 / CB 15) (Caulobacter crescentus).